The primary structure comprises 75 residues: Small ribosomal subunit protein bS18 (75 aa).

Belongs to the bacterial ribosomal protein bS18 family. In terms of assembly, part of the 30S ribosomal subunit. Forms a tight heterodimer with protein bS6.

Its function is as follows. Binds as a heterodimer with protein bS6 to the central domain of the 16S rRNA, where it helps stabilize the platform of the 30S subunit. The polypeptide is Small ribosomal subunit protein bS18 (Mycoplasma mycoides subsp. mycoides SC (strain CCUG 32753 / NCTC 10114 / PG1)).